A 591-amino-acid chain; its full sequence is UvrABC system protein C (591 aa).

The GIY-YIG domain maps to 14–91; the sequence is DSPGCYLHKD…IQKNMPKYNI (78 aa). The 36-residue stretch at 196–231 folds into the UVR domain; the sequence is DKIVTGLKEKMLAASQAMEFERAAEYRDLISGIATL.

Belongs to the UvrC family. Interacts with UvrB in an incision complex.

The protein resides in the cytoplasm. The UvrABC repair system catalyzes the recognition and processing of DNA lesions. UvrC both incises the 5' and 3' sides of the lesion. The N-terminal half is responsible for the 3' incision and the C-terminal half is responsible for the 5' incision. The polypeptide is UvrABC system protein C (Streptococcus uberis (strain ATCC BAA-854 / 0140J)).